A 108-amino-acid polypeptide reads, in one-letter code: Small ribosomal subunit protein eS25y (108 aa).

The interval 1-36 is disordered; it reads MAPKKDKVPPPSSKPAKSGGGKQKKKKWSKGKQKEK. Positions 22–31 are enriched in basic residues; it reads KQKKKKWSKG.

Belongs to the eukaryotic ribosomal protein eS25 family.

The protein is Small ribosomal subunit protein eS25y (RPS25B) of Arabidopsis thaliana (Mouse-ear cress).